Here is a 97-residue protein sequence, read N- to C-terminus: Antitoxin YafN (97 aa).

The protein belongs to the phD/YefM antitoxin family. In terms of assembly, probably forms a complex with the mRNA interferase YafO which inhibits the mRNA interferase activity.

Antitoxin component of a type II toxin-antitoxin (TA) system. Functions as an mRNA interferase antitoxin; overexpression prevents YafO-mediated cessation of cell growth and inhibition of cell proliferation. This is Antitoxin YafN (yafN) from Escherichia coli (strain K12).